The sequence spans 138 residues: Large ribosomal subunit protein uL16 (138 aa).

The protein belongs to the universal ribosomal protein uL16 family. Part of the 50S ribosomal subunit.

Binds 23S rRNA and is also seen to make contacts with the A and possibly P site tRNAs. The polypeptide is Large ribosomal subunit protein uL16 (Chlamydia muridarum (strain MoPn / Nigg)).